The primary structure comprises 542 residues: Gamma-terpinene synthase 1 (542 aa).

2 residues coordinate Mn(2+): D295 and D299. The DDXXD motif motif lies at 295-299; that stretch reads DDVYD. 2 homodimerization regions span residues 301 to 307 and 373 to 410; these read YDTLDEL and EAKW…FTLP. Positions 439 and 447 each coordinate Mn(2+).

Belongs to the terpene synthase family. Homodimer. Requires Mn(2+) as cofactor. It depends on Mg(2+) as a cofactor. In terms of tissue distribution, mostly expressed in flowers and, to a lower extent, in leaves, especially in glandular trichomes.

The enzyme catalyses (2E)-geranyl diphosphate = gamma-terpinene + diphosphate. It catalyses the reaction (2E)-geranyl diphosphate = alpha-terpinene + diphosphate. It participates in secondary metabolite biosynthesis; terpenoid biosynthesis. In terms of biological role, involved in the biosynthesis of phenolic monoterpenes natural products thymol and carvacrol which have a broad range of biological activities acting as antimicrobial compounds, insecticides, antioxidants and pharmaceutical agents. Monoterpene synthase which catalyzes the conversion of geranyl diphosphate (GPP) to gamma-terpinene and the minor products alpha-thujene, alpha-terpinene, myrcene, sabinene, (+)-R-limonene, alpha-pinene and alpha-phellandrene. The chain is Gamma-terpinene synthase 1 from Thymus vulgaris (Thyme).